Reading from the N-terminus, the 479-residue chain is Cardiolipin synthase A (479 aa).

The next 2 membrane-spanning stretches (helical) occupy residues 8 to 28 (FFGY…IHAL) and 38 to 58 (IAWA…YLVF). 2 PLD phosphodiesterase domains span residues 218-245 (INFR…GDEY) and 392-419 (EPGF…DNRS). Residues His223, Lys225, Asp230, His397, Lys399, and Asp404 contribute to the active site.

Belongs to the phospholipase D family. Cardiolipin synthase subfamily. ClsA sub-subfamily.

It is found in the cell inner membrane. It catalyses the reaction 2 a 1,2-diacyl-sn-glycero-3-phospho-(1'-sn-glycerol) = a cardiolipin + glycerol. In terms of biological role, catalyzes the reversible phosphatidyl group transfer from one phosphatidylglycerol molecule to another to form cardiolipin (CL) (diphosphatidylglycerol) and glycerol. This is Cardiolipin synthase A from Pseudomonas syringae pv. syringae (strain B728a).